The primary structure comprises 306 residues: Agmatinase (306 aa).

Mn(2+)-binding residues include His126, Asp149, His151, Asp153, Asp230, and Asp232.

It belongs to the arginase family. Agmatinase subfamily. Requires Mn(2+) as cofactor.

The catalysed reaction is agmatine + H2O = urea + putrescine. The protein operates within amine and polyamine biosynthesis; putrescine biosynthesis via agmatine pathway; putrescine from agmatine: step 1/1. Catalyzes the formation of putrescine from agmatine. The polypeptide is Agmatinase (Citrobacter koseri (strain ATCC BAA-895 / CDC 4225-83 / SGSC4696)).